Consider the following 369-residue polypeptide: S-adenosylmethionine decarboxylase proenzyme 2 (369 aa).

Residues Glu9 and Glu12 contribute to the active site. The Schiff-base intermediate with substrate; via pyruvic acid role is filled by Ser69. Residue Ser69 is modified to Pyruvic acid (Ser); by autocatalysis. The active-site Proton donor; for catalytic activity is Cys83. Residues Ser236 and His249 each act as proton acceptor; for processing activity in the active site.

Belongs to the eukaryotic AdoMetDC family. Requires pyruvate as cofactor. Is synthesized initially as an inactive proenzyme. Formation of the active enzyme involves a self-maturation process in which the active site pyruvoyl group is generated from an internal serine residue via an autocatalytic post-translational modification. Two non-identical subunits are generated from the proenzyme in this reaction, and the pyruvate is formed at the N-terminus of the alpha chain, which is derived from the carboxyl end of the proenzyme. The post-translation cleavage follows an unusual pathway, termed non-hydrolytic serinolysis, in which the side chain hydroxyl group of the serine supplies its oxygen atom to form the C-terminus of the beta chain, while the remainder of the serine residue undergoes an oxidative deamination to produce ammonia and the pyruvoyl group blocking the N-terminus of the alpha chain.

The catalysed reaction is S-adenosyl-L-methionine + H(+) = S-adenosyl 3-(methylsulfanyl)propylamine + CO2. The protein operates within amine and polyamine biosynthesis; S-adenosylmethioninamine biosynthesis; S-adenosylmethioninamine from S-adenosyl-L-methionine: step 1/1. The polypeptide is S-adenosylmethionine decarboxylase proenzyme 2 (SAMDC2) (Brassica juncea (Indian mustard)).